An 836-amino-acid polypeptide reads, in one-letter code: CUB domain-containing protein 1 (836 aa).

The signal sequence occupies residues Met-1–Ala-29. The Extracellular segment spans residues Phe-30–Thr-667. Residues Asn-39, Asn-122, Asn-180, Asn-205, Asn-270, Asn-310, and Asn-386 are each glycosylated (N-linked (GlcNAc...) asparagine). In terms of domain architecture, CUB spans Cys-417–Glu-544. A disulfide bridge links Cys-476 with Cys-499. Residues Val-668–Ile-688 form a helical membrane-spanning segment. Over Cys-689 to Glu-836 the chain is Cytoplasmic. A Phosphotyrosine modification is found at Tyr-734. The disordered stretch occupies residues Pro-776 to Glu-836.

In terms of assembly, interacts with CDH2/N-cadherin, CDH3/P-cadherin, SDC1/syndecan-1, SDC4/syndecan-4 and the serine protease ST14/MT-SP1. Also interacts with SRC and PRKCG/protein kinase C gamma. Post-translationally, phosphorylated on tyrosine by kinases of the SRC family such as SRC and YES as well as by the protein kinase C gamma/PRKCG. Dephosphorylated by phosphotyrosine phosphatases. Also phosphorylated by suramin, a heparin analog. Tyrosine phosphorylated in response to dissociation of integrin alpha-6 beta-4 from laminin-5. In terms of processing, N-glycosylated. A soluble form may also be produced by proteolytic cleavage at the cell surface (shedding). Another peptide of 80 kDa (p80) is present in cultured keratinocytes probably due to tryptic cleavage at an unidentified site on its N-terminal side. Converted to p80 by plasmin, a trypsin-like protease. In terms of tissue distribution, highly expressed in mitotic cells with low expression during interphase. Detected at highest levels in skeletal muscle and colon with lower levels in kidney, small intestine, placenta and lung. Up-regulated in a number of human tumor cell lines, as well as in colorectal cancer, breast carcinoma and lung cancer. Also expressed in cells with phenotypes reminiscent of mesenchymal stem cells and neural stem cells.

It is found in the cell membrane. The protein resides in the secreted. Functionally, may be involved in cell adhesion and cell matrix association. May play a role in the regulation of anchorage versus migration or proliferation versus differentiation via its phosphorylation. May be a novel marker for leukemia diagnosis and for immature hematopoietic stem cell subsets. Belongs to the tetraspanin web involved in tumor progression and metastasis. The protein is CUB domain-containing protein 1 (CDCP1) of Homo sapiens (Human).